The chain runs to 305 residues: Insulin-like peptide (305 aa).

The signal sequence occupies residues 1-22; it reads MNLSSVYVLASLAVVCLLVKET. Intrachain disulfides connect cysteine 28-cysteine 87, cysteine 40-cysteine 100, and cysteine 86-cysteine 91. The propeptide at 52-76 is connecting peptide; it reads SVSKRAIDFISEQQAKDYMGAMPHI. Residues 102-114 are d; the sequence is PYSTAPATATPVR. The propeptide at 102 to 305 is d/E peptide; the sequence is PYSTAPATAT…RDSYHLTELR (204 aa). Residues 107-118 show a composition bias toward low complexity; the sequence is PATATPVRTTEP. Disordered stretches follow at residues 107–130 and 236–305; these read PATATPVRTTEPQPEEAEDDPLDG and HNQT…TELR. An e region spans residues 115–305; sequence TTEPQPEEAE…RDSYHLTELR (191 aa). Residues 119–128 show a composition bias toward acidic residues; it reads QPEEAEDDPL. Basic and acidic residues-rich tracts occupy residues 236–245 and 291–305; these read HNQTDKKEPT and RRIESRDSYHLTELR.

The protein belongs to the insulin family.

It is found in the secreted. This is Insulin-like peptide (ILP) from Branchiostoma californiense (California lancelet).